The sequence spans 102 residues: Small ribosomal subunit protein uS10 (102 aa).

The protein belongs to the universal ribosomal protein uS10 family. As to quaternary structure, part of the 30S ribosomal subunit.

In terms of biological role, involved in the binding of tRNA to the ribosomes. The chain is Small ribosomal subunit protein uS10 from Pediococcus pentosaceus (strain ATCC 25745 / CCUG 21536 / LMG 10740 / 183-1w).